Reading from the N-terminus, the 508-residue chain is Ribonuclease Y (508 aa).

The helical transmembrane segment at 1-21 (MMLWYIVAGAGGLLIGYLIAN) threads the bilayer. In terms of domain architecture, KH spans 198–283 (TVSTVSLPSD…EMYEKAKQEV (86 aa)). The HD domain occupies 324-417 (VLNHSIEVAL…VAAADALSAA (94 aa)).

This sequence belongs to the RNase Y family.

It localises to the cell membrane. Its function is as follows. Endoribonuclease that initiates mRNA decay. This Thermotoga maritima (strain ATCC 43589 / DSM 3109 / JCM 10099 / NBRC 100826 / MSB8) protein is Ribonuclease Y.